The chain runs to 392 residues: Digeranylgeranylglycerophospholipid reductase (392 aa).

FAD-binding residues include Gly15, Glu34, Cys45, Ala46, Gly48, Arg99, Ala123, Asp279, Gly291, and Ile292. Val370 lines the a 2,3-bis-O-(geranylgeranyl)-sn-glycerol 1-phospholipid pocket.

Belongs to the geranylgeranyl reductase family. DGGGPL reductase subfamily. FAD is required as a cofactor.

The enzyme catalyses a 2,3-bis-O-phytanyl-sn-glycerol 1-phospholipid + 8 oxidized 2[4Fe-4S]-[ferredoxin] = a 2,3-bis-O-(geranylgeranyl)-sn-glycerol 1-phospholipid + 8 reduced 2[4Fe-4S]-[ferredoxin] + 16 H(+). It carries out the reaction 2,3-bis-O-(phytanyl)-sn-glycerol 1-phosphate + 8 oxidized 2[4Fe-4S]-[ferredoxin] = 2,3-bis-O-(geranylgeranyl)-sn-glycerol 1-phosphate + 8 reduced 2[4Fe-4S]-[ferredoxin] + 16 H(+). It catalyses the reaction a 2,3-bis-O-phytanyl-sn-glycerol 1-phospholipid + 8 A = a 2,3-bis-O-(geranylgeranyl)-sn-glycerol 1-phospholipid + 8 AH2. The catalysed reaction is CDP-2,3-bis-O-(geranylgeranyl)-sn-glycerol + 8 AH2 = CDP-2,3-bis-O-(phytanyl)-sn-glycerol + 8 A. The enzyme catalyses archaetidylserine + 8 AH2 = 2,3-bis-O-phytanyl-sn-glycero-3-phospho-L-serine + 8 A. Its pathway is membrane lipid metabolism; glycerophospholipid metabolism. Is involved in the reduction of 2,3-digeranylgeranylglycerophospholipids (unsaturated archaeols) into 2,3-diphytanylglycerophospholipids (saturated archaeols) in the biosynthesis of archaeal membrane lipids. Catalyzes the formation of archaetidic acid (2,3-di-O-phytanyl-sn-glyceryl phosphate) from 2,3-di-O-geranylgeranylglyceryl phosphate (DGGGP) via the hydrogenation of each double bond of the isoprenoid chains. Is also probably able to reduce double bonds of geranyl groups in CDP-2,3-bis-O-(geranylgeranyl)-sn-glycerol and archaetidylserine, thus acting at various stages in the biosynthesis of archaeal membrane lipids. The protein is Digeranylgeranylglycerophospholipid reductase of Methanocella arvoryzae (strain DSM 22066 / NBRC 105507 / MRE50).